The chain runs to 56 residues: Serine protease inhibitor Kazal-type 1 (56 aa).

The Kazal-like domain occupies 3 to 56 (LGREAKCNNNAGGCTKIYNPVCGTDGNTYPNECMLCVENQKRQMPVLIQRSGPC). 3 cysteine pairs are disulfide-bonded: Cys-9–Cys-38, Cys-16–Cys-35, and Cys-24–Cys-56.

It is found in the secreted. Functionally, serine protease inhibitor which exhibits anti-trypsin activity. In the pancreas, protects against trypsin-catalyzed premature activation of zymogens. In the male reproductive tract, binds to sperm heads where it modulates sperm capacitance by inhibiting calcium uptake and nitrogen oxide (NO) production. This Equus caballus (Horse) protein is Serine protease inhibitor Kazal-type 1 (SPINK1).